The chain runs to 1395 residues: G-protein coupled receptor-associated sorting protein 1 (1395 aa).

Disordered regions lie at residues 1 to 25 (MTGA…VVGG), 45 to 83 (QIMP…AKAI), and 269 to 288 (TNTW…FRSK). Basic and acidic residues predominate over residues 269–281 (TNTWSGPREDPNS). Residue Ser-297 is modified to Phosphoserine. Positions 446–469 (SMGTGASSKSRPRTDGERIGDSLF) are disordered. A compositionally biased stretch (basic and acidic residues) spans 457-469 (PRTDGERIGDSLF). Ser-631 and Ser-899 each carry phosphoserine. Residues 899 to 1395 (SETEEETIFG…QNDPEGDQEN (497 aa)) form an OPRD1-binding region.

Belongs to the GPRASP family. As to quaternary structure, interacts with cytoplasmic tails of a variety of G-protein coupled receptors such as D2 dopamine receptor/DRD2, delta opioid receptor/OPRD1, beta-2 adrenergic receptor/ADRB2 and D4 dopamine receptor/DRD4. Interacts with PER1. Interacts with BECN2; the interaction is direct. In terms of tissue distribution, expressed in the brain, with lower expression in medulla, spinal cord and substantia nigra.

It localises to the cytoplasm. Modulates lysosomal sorting and functional down-regulation of a variety of G-protein coupled receptors. Targets receptors for degradation in lysosomes via its interaction with BECN2. The sequence is that of G-protein coupled receptor-associated sorting protein 1 (GPRASP1) from Homo sapiens (Human).